The primary structure comprises 185 residues: Ribosome-recycling factor (185 aa).

It belongs to the RRF family.

Its subcellular location is the cytoplasm. Responsible for the release of ribosomes from messenger RNA at the termination of protein biosynthesis. May increase the efficiency of translation by recycling ribosomes from one round of translation to another. This chain is Ribosome-recycling factor, found in Ectopseudomonas mendocina (strain ymp) (Pseudomonas mendocina).